The sequence spans 267 residues: Alkaline ceramidase 3 (267 aa).

Residues 1 to 33 (MAPAADREGYWGPTTSTLDWCEENYSVTWYIAE) are Cytoplasmic-facing. Residues Asp-19, Trp-20, Glu-22, Asn-24, and Glu-33 each contribute to the Ca(2+) site. Residues 34–55 (FWNTVSNLIMIIPPMFGAVQSV) traverse the membrane as a helical segment. Over 56-61 (RDGLEK) the chain is Lumenal. The helical transmembrane segment at 62 to 82 (RYIASYLALTVVGMGSWCFHM) threads the bilayer. Residue His-81 participates in Zn(2+) binding. Topologically, residues 83-87 (TLKYE) are cytoplasmic. A helical membrane pass occupies residues 88–108 (MQLLDELPMIYSCCIFVYCMF). The Lumenal portion of the chain corresponds to 109–118 (ECFKIKNSVN). The chain crosses the membrane as a helical span at residues 119 to 139 (YHLLFTLVLFSLIVTTVYLKV). Topologically, residues 140–141 (KE) are cytoplasmic. The chain crosses the membrane as a helical span at residues 142-162 (PIFHQVMYGMLVFTLVLRSIY). Residues 163–173 (IVTWVYPWLRG) lie on the Lumenal side of the membrane. The chain crosses the membrane as a helical span at residues 174-194 (LGYTSLGIFLLGFLFWNIDNI). Residues 195 to 215 (FCESLRNFRKKVPPIIGITTQ) lie on the Cytoplasmic side of the membrane. Residues 216–236 (FHAWWHILTGLGSYLHILFSL) traverse the membrane as a helical segment. 2 residues coordinate Zn(2+): His-217 and His-221. At 237–267 (YTRTLYLRYRPKVKFLFGIWPVILFEPLRKH) the chain is on the lumenal side.

The protein belongs to the alkaline ceramidase family. The cofactor is Zn(2+). Ubiquitously expressed. Highly expressed in placenta. Expressed in erythrocytes.

The protein resides in the endoplasmic reticulum membrane. Its subcellular location is the golgi apparatus membrane. The enzyme catalyses an N-acyl-(4R)-4-hydroxysphinganine + H2O = (4R)-hydroxysphinganine + a fatty acid. The catalysed reaction is N-(5Z,8Z,11Z,14Z-eicosatetraenoyl)-sphing-4-enine + H2O = sphing-4-enine + (5Z,8Z,11Z,14Z)-eicosatetraenoate. It carries out the reaction N-(5Z,8Z,11Z,14Z-eicosatetraenoyl)-sphinganine + H2O = sphinganine + (5Z,8Z,11Z,14Z)-eicosatetraenoate. It catalyses the reaction N-(5Z,8Z,11Z,14Z-eicosatetraenoyl)-(4R)-hydroxysphinganine + H2O = (4R)-hydroxysphinganine + (5Z,8Z,11Z,14Z)-eicosatetraenoate. The enzyme catalyses N-(11Z-eicosenoyl)-sphing-4-enine + H2O = (11Z)-eicosenoate + sphing-4-enine. The catalysed reaction is N-(11Z-eicosenoyl)-sphinganine + H2O = (11Z)-eicosenoate + sphinganine. It carries out the reaction N-(11Z-eicosenoyl)-(4R)-hydroxysphinganine + H2O = (11Z)-eicosenoate + (4R)-hydroxysphinganine. It catalyses the reaction N-(9Z-octadecenoyl)-sphing-4-enine + H2O = sphing-4-enine + (9Z)-octadecenoate. The enzyme catalyses N-(9Z-octadecenoyl)-sphinganine + H2O = sphinganine + (9Z)-octadecenoate. The catalysed reaction is N-(9Z-octadecenoyl)-(4R)-hydroxysphinganine + H2O = (4R)-hydroxysphinganine + (9Z)-octadecenoate. It carries out the reaction an N-acylsphing-4-enine + H2O = sphing-4-enine + a fatty acid. It catalyses the reaction an N-acylsphinganine + H2O = sphinganine + a fatty acid. Its pathway is lipid metabolism; sphingolipid metabolism. Activated by 5 mM Ca(2+) and inhibited by 5 mM Zn(2+). In terms of biological role, endoplasmic reticulum and Golgi ceramidase that catalyzes the hydrolysis of unsaturated long-chain C18:1-, C20:1- and C20:4-ceramides, dihydroceramides and phytoceramides into sphingoid bases like sphingosine and free fatty acids at alkaline pH. Ceramides, sphingosine, and its phosphorylated form sphingosine-1-phosphate are bioactive lipids that mediate cellular signaling pathways regulating several biological processes including cell proliferation, apoptosis and differentiation. Controls the generation of sphingosine in erythrocytes, and thereby sphingosine-1-phosphate in plasma. Through the regulation of ceramides and sphingosine-1-phosphate homeostasis in the brain may play a role in neurons survival and function. By regulating the levels of pro-inflammatory ceramides in immune cells and tissues, may modulate the inflammatory response. In Homo sapiens (Human), this protein is Alkaline ceramidase 3 (ACER3).